Reading from the N-terminus, the 611-residue chain is 1,4-alpha-glucan branching enzyme GlgB (611 aa).

D302 serves as the catalytic Nucleophile. The active-site Proton donor is the E343.

The protein belongs to the glycosyl hydrolase 13 family. GlgB subfamily. As to quaternary structure, monomer.

The enzyme catalyses Transfers a segment of a (1-&gt;4)-alpha-D-glucan chain to a primary hydroxy group in a similar glucan chain.. The protein operates within glycan biosynthesis; glycogen biosynthesis. Functionally, catalyzes the formation of the alpha-1,6-glucosidic linkages in glycogen by scission of a 1,4-alpha-linked oligosaccharide from growing alpha-1,4-glucan chains and the subsequent attachment of the oligosaccharide to the alpha-1,6 position. This chain is 1,4-alpha-glucan branching enzyme GlgB, found in Fusobacterium nucleatum subsp. nucleatum (strain ATCC 25586 / DSM 15643 / BCRC 10681 / CIP 101130 / JCM 8532 / KCTC 2640 / LMG 13131 / VPI 4355).